Reading from the N-terminus, the 470-residue chain is Glutamate--tRNA ligase (470 aa).

The 'HIGH' region signature appears at 9–19 (PSPTGFLHVGG). The 'KMSKS' region signature appears at 236-240 (RLSKR). K239 contacts ATP.

Belongs to the class-I aminoacyl-tRNA synthetase family. Glutamate--tRNA ligase type 1 subfamily. Monomer.

The protein localises to the cytoplasm. The enzyme catalyses tRNA(Glu) + L-glutamate + ATP = L-glutamyl-tRNA(Glu) + AMP + diphosphate. Catalyzes the attachment of glutamate to tRNA(Glu) in a two-step reaction: glutamate is first activated by ATP to form Glu-AMP and then transferred to the acceptor end of tRNA(Glu). The chain is Glutamate--tRNA ligase from Legionella pneumophila subsp. pneumophila (strain Philadelphia 1 / ATCC 33152 / DSM 7513).